Consider the following 396-residue polypeptide: 8-amino-7-oxononanoate synthase (396 aa).

Position 19 (R19) interacts with substrate. 106–107 (GY) contributes to the pyridoxal 5'-phosphate binding site. Residue H131 coordinates substrate. The pyridoxal 5'-phosphate site is built by S176, H204, and T233. K236 bears the N6-(pyridoxal phosphate)lysine mark. Residue T350 coordinates substrate.

The protein belongs to the class-II pyridoxal-phosphate-dependent aminotransferase family. BioF subfamily. In terms of assembly, homodimer. The cofactor is pyridoxal 5'-phosphate.

The catalysed reaction is 6-carboxyhexanoyl-[ACP] + L-alanine + H(+) = (8S)-8-amino-7-oxononanoate + holo-[ACP] + CO2. Its pathway is cofactor biosynthesis; biotin biosynthesis. Catalyzes the decarboxylative condensation of pimeloyl-[acyl-carrier protein] and L-alanine to produce 8-amino-7-oxononanoate (AON), [acyl-carrier protein], and carbon dioxide. This is 8-amino-7-oxononanoate synthase from Pseudomonas savastanoi pv. phaseolicola (strain 1448A / Race 6) (Pseudomonas syringae pv. phaseolicola (strain 1448A / Race 6)).